Here is a 342-residue protein sequence, read N- to C-terminus: DNA repair protein RAD51 homolog 1 (342 aa).

The segment at M1–G24 is disordered. A HhH domain is found at T51–A80. Positions Q100 to I314 constitute a FtsK domain. Residue G130–T137 coordinates ATP.

The protein belongs to the RecA family. RAD51 subfamily. As to quaternary structure, self-associates and interacts with XRCC3. Binds to RAD54/CHR25. Interacts with BRCA2A and BRCA2B. Can form a tripartite complex with both BRCA2B and DSS1(I). Detected in various tissues. Higher expression in reproductive tissues than in vegetative tissues, with the highest expression level in young flower buds. At cellular level, is expressed at low levels in flower primordia, then at higher levels in young anthers and at highest levels in both females and males meiocytes. Not detected in gametophytes.

It localises to the nucleus. Binds to single and double-stranded DNA and exhibits DNA-dependent ATPase activity. Unwinds duplex DNA. Component of the meiotic recombination pathway. Seems to play a role in mediating chromosome homology search, chromosome pairing and synapsis at early stages and probably chromosome crossing-over at later stages in meiosis. Probably is involved in the repair of meiotic double strand breaks (DBSs) generated by AtSPO11-1 and in homologous recombination. Its function is dispensable for vegetative growth and root mitosis. This chain is DNA repair protein RAD51 homolog 1, found in Arabidopsis thaliana (Mouse-ear cress).